The primary structure comprises 132 residues: MGRDTIADIITSIRNADMDKKGTVRIASTNITETIVKILLREGFIENVRKHRENDQFFLVSTLRHRRNRKGPYRTILKRISRPGLRIYSNYQRIPRILGGMGIVILSTSRGIMTDREARLEGIGGEILCYIW.

Belongs to the universal ribosomal protein uS8 family. Part of the 30S ribosomal subunit.

The protein resides in the plastid. Its subcellular location is the chloroplast. One of the primary rRNA binding proteins, it binds directly to 16S rRNA central domain where it helps coordinate assembly of the platform of the 30S subunit. This Nandina domestica (Heavenly bamboo) protein is Small ribosomal subunit protein uS8c (rps8).